The primary structure comprises 417 residues: Equilibrative nucleotide transporter 7 (417 aa).

The next 11 helical transmembrane spans lie at 19 to 39 (LVCC…LTIT), 54 to 74 (VLTI…ATKE), 84 to 104 (IFGY…DLAS), 110 to 130 (VVAY…DAFV), 143 to 163 (PDFI…TSVL), 184 to 204 (LFIG…TLVF), 264 to 284 (LGIN…GFLY), 293 to 315 (GDWY…RFIP), 326 to 346 (KWIT…YFTA), 353 to 373 (WMLF…VCIF), and 392 to 412 (MCVF…LWLI).

It belongs to the SLC29A/ENT transporter (TC 2.A.57) family. Expressed in leaves and flowers.

It is found in the cell membrane. Functionally, nucleoside transporter that can mediate uptake of adenosine, uridine, guanosine or cytidine when expressed in a heterologous system (yeast). The polypeptide is Equilibrative nucleotide transporter 7 (ENT7) (Arabidopsis thaliana (Mouse-ear cress)).